Reading from the N-terminus, the 290-residue chain is 33 kDa chaperonin (290 aa).

2 disulfides stabilise this stretch: cysteine 235–cysteine 237 and cysteine 268–cysteine 271.

It belongs to the HSP33 family. In terms of processing, under oxidizing conditions two disulfide bonds are formed involving the reactive cysteines. Under reducing conditions zinc is bound to the reactive cysteines and the protein is inactive.

It localises to the cytoplasm. In terms of biological role, redox regulated molecular chaperone. Protects both thermally unfolding and oxidatively damaged proteins from irreversible aggregation. Plays an important role in the bacterial defense system toward oxidative stress. The protein is 33 kDa chaperonin of Streptococcus uberis (strain ATCC BAA-854 / 0140J).